The following is a 93-amino-acid chain: Beta-defensin 128 (93 aa).

The signal sequence occupies residues 1–18 (MKLFLVLIILLFEVLTDG). Intrachain disulfides connect C24–C52, C32–C46, and C36–C53.

Belongs to the beta-defensin family.

The protein resides in the secreted. In terms of biological role, has antibacterial activity. The polypeptide is Beta-defensin 128 (DEFB128) (Homo sapiens (Human)).